The sequence spans 150 residues: Large ribosomal subunit protein bL9 (150 aa).

It belongs to the bacterial ribosomal protein bL9 family.

Its function is as follows. Binds to the 23S rRNA. This Corynebacterium kroppenstedtii (strain DSM 44385 / JCM 11950 / CIP 105744 / CCUG 35717) protein is Large ribosomal subunit protein bL9.